The sequence spans 847 residues: Leucine--tRNA ligase (847 aa).

The short motif at 41–51 (PYPSGRIHMGH) is the 'HIGH' region element. The 'KMSKS' region motif lies at 619-623 (KMSKS). Lys622 contacts ATP.

This sequence belongs to the class-I aminoacyl-tRNA synthetase family.

The protein localises to the cytoplasm. It carries out the reaction tRNA(Leu) + L-leucine + ATP = L-leucyl-tRNA(Leu) + AMP + diphosphate. In Cereibacter sphaeroides (strain ATCC 17029 / ATH 2.4.9) (Rhodobacter sphaeroides), this protein is Leucine--tRNA ligase.